The sequence spans 443 residues: Xaa-Pro dipeptidase (443 aa).

Positions 246, 257, 339, 384, and 423 each coordinate Mn(2+).

Belongs to the peptidase M24B family. Bacterial-type prolidase subfamily. Requires Mn(2+) as cofactor.

The enzyme catalyses Xaa-L-Pro dipeptide + H2O = an L-alpha-amino acid + L-proline. Its function is as follows. Splits dipeptides with a prolyl residue in the C-terminal position. The chain is Xaa-Pro dipeptidase from Enterobacter sp. (strain 638).